The chain runs to 125 residues: Small ribosomal subunit protein uS13 (125 aa).

The segment at 93 to 125 (RAGLPVRGQRTRTNARTRRGARKTVAGKKKATR) is disordered. Basic residues predominate over residues 101-125 (QRTRTNARTRRGARKTVAGKKKATR).

Belongs to the universal ribosomal protein uS13 family. As to quaternary structure, part of the 30S ribosomal subunit. Forms a loose heterodimer with protein S19. Forms two bridges to the 50S subunit in the 70S ribosome.

Its function is as follows. Located at the top of the head of the 30S subunit, it contacts several helices of the 16S rRNA. In the 70S ribosome it contacts the 23S rRNA (bridge B1a) and protein L5 of the 50S subunit (bridge B1b), connecting the 2 subunits; these bridges are implicated in subunit movement. Contacts the tRNAs in the A and P-sites. In Synechococcus elongatus (strain ATCC 33912 / PCC 7942 / FACHB-805) (Anacystis nidulans R2), this protein is Small ribosomal subunit protein uS13.